The chain runs to 160 residues: uncharacterized protein (160 aa).

A signal peptide spans M1 to A29.

This is an uncharacterized protein from Sinorhizobium fredii (strain NBRC 101917 / NGR234).